Here is a 953-residue protein sequence, read N- to C-terminus: Isoleucine--tRNA ligase (953 aa).

Positions 57–67 (PYANGDIHIGH) match the 'HIGH' region motif. Residue Glu582 coordinates L-isoleucyl-5'-AMP. The 'KMSKS' region signature appears at 623–627 (KMSKS). Lys626 contributes to the ATP binding site. Cys916, Cys919, Cys936, and Cys939 together coordinate Zn(2+).

Belongs to the class-I aminoacyl-tRNA synthetase family. IleS type 1 subfamily. In terms of assembly, monomer. It depends on Zn(2+) as a cofactor.

The protein resides in the cytoplasm. The catalysed reaction is tRNA(Ile) + L-isoleucine + ATP = L-isoleucyl-tRNA(Ile) + AMP + diphosphate. In terms of biological role, catalyzes the attachment of isoleucine to tRNA(Ile). As IleRS can inadvertently accommodate and process structurally similar amino acids such as valine, to avoid such errors it has two additional distinct tRNA(Ile)-dependent editing activities. One activity is designated as 'pretransfer' editing and involves the hydrolysis of activated Val-AMP. The other activity is designated 'posttransfer' editing and involves deacylation of mischarged Val-tRNA(Ile). The polypeptide is Isoleucine--tRNA ligase (Bordetella parapertussis (strain 12822 / ATCC BAA-587 / NCTC 13253)).